Here is a 420-residue protein sequence, read N- to C-terminus: 3-phosphoshikimate 1-carboxyvinyltransferase (420 aa).

Lys20, Ser21, and Arg25 together coordinate 3-phosphoshikimate. Phosphoenolpyruvate is bound at residue Lys20. Position 119 (Arg119) interacts with phosphoenolpyruvate. 7 residues coordinate 3-phosphoshikimate: Ser161, Ser162, Gln163, Ser189, Asp303, Gln326, and Lys330. Residue Gln163 coordinates phosphoenolpyruvate. Asp303 serves as the catalytic Proton acceptor. 3 residues coordinate phosphoenolpyruvate: Arg334, Arg375, and Lys400.

The protein belongs to the EPSP synthase family. Monomer.

The protein localises to the cytoplasm. It catalyses the reaction 3-phosphoshikimate + phosphoenolpyruvate = 5-O-(1-carboxyvinyl)-3-phosphoshikimate + phosphate. The protein operates within metabolic intermediate biosynthesis; chorismate biosynthesis; chorismate from D-erythrose 4-phosphate and phosphoenolpyruvate: step 6/7. Its function is as follows. Catalyzes the transfer of the enolpyruvyl moiety of phosphoenolpyruvate (PEP) to the 5-hydroxyl of shikimate-3-phosphate (S3P) to produce enolpyruvyl shikimate-3-phosphate and inorganic phosphate. This is 3-phosphoshikimate 1-carboxyvinyltransferase from Dehalococcoides mccartyi (strain ATCC BAA-2266 / KCTC 15142 / 195) (Dehalococcoides ethenogenes (strain 195)).